We begin with the raw amino-acid sequence, 455 residues long: Maintenance of telomere capping protein 1 (455 aa).

Disordered regions lie at residues 1–113 (MAET…SATP) and 296–317 (AKKM…EDAS). Positions 27-38 (PTSKEFNNDDSK) are enriched in basic and acidic residues. Residues 80–113 (VAATSNERQQHDASNQPSQAAQTTINKNTESATP) are compositionally biased toward polar residues. The segment covering 296-305 (AKKMNKENKQ) has biased composition (basic and acidic residues).

This sequence belongs to the MTC1 family.

The protein localises to the cytoplasm. Its function is as follows. Involved in telomere capping. The sequence is that of Maintenance of telomere capping protein 1 from Schizosaccharomyces pombe (strain 972 / ATCC 24843) (Fission yeast).